Consider the following 288-residue polypeptide: Phosphatidylglycerol--prolipoprotein diacylglyceryl transferase (288 aa).

4 consecutive transmembrane segments (helical) span residues I8 to I28, A49 to L69, I79 to G99, and I109 to G129. R130 provides a ligand contact to a 1,2-diacyl-sn-glycero-3-phospho-(1'-sn-glycerol). 3 helical membrane-spanning segments follow: residues P203–L223, G232–F252, and F259–F279.

The protein belongs to the Lgt family.

It is found in the cell inner membrane. The enzyme catalyses L-cysteinyl-[prolipoprotein] + a 1,2-diacyl-sn-glycero-3-phospho-(1'-sn-glycerol) = an S-1,2-diacyl-sn-glyceryl-L-cysteinyl-[prolipoprotein] + sn-glycerol 1-phosphate + H(+). Its pathway is protein modification; lipoprotein biosynthesis (diacylglyceryl transfer). Catalyzes the transfer of the diacylglyceryl group from phosphatidylglycerol to the sulfhydryl group of the N-terminal cysteine of a prolipoprotein, the first step in the formation of mature lipoproteins. This is Phosphatidylglycerol--prolipoprotein diacylglyceryl transferase from Fusobacterium nucleatum subsp. nucleatum (strain ATCC 25586 / DSM 15643 / BCRC 10681 / CIP 101130 / JCM 8532 / KCTC 2640 / LMG 13131 / VPI 4355).